The sequence spans 122 residues: HetP-like commitment protein Alr3234 (122 aa).

Belongs to the HetP family. In terms of assembly, in bacterial two-hybrid assays interacts robustly with itself, Asl1930, Alr2902 and HetR and weakly with HetP.

In terms of biological role, delays heterocyst differentiation and commitment when nitrogen is limiting. Interplay between the 4 HetP paralogs controls the timing of commitment to heterocyst formation and its duration. Epistatic analysis show that the 3 paralogs act upstream of hetP to delay commitment (asl1930, alr3234) or inhibit development (alr2902). Asl1930 and Alr3234 must also attenuate the activity of Alr2902. Ectopic expression does not complement a hetP deletion. This Nostoc sp. (strain PCC 7120 / SAG 25.82 / UTEX 2576) protein is HetP-like commitment protein Alr3234.